A 381-amino-acid chain; its full sequence is Queuine tRNA-ribosyltransferase (381 aa).

Asp-96 acts as the Proton acceptor in catalysis. Residues Asp-96–Phe-100, Asp-150, Gln-193, and Gly-220 contribute to the substrate site. The tract at residues Gly-251–Ala-257 is RNA binding. The active-site Nucleophile is the Asp-270. Positions Thr-275–Arg-279 are RNA binding; important for wobble base 34 recognition. Zn(2+)-binding residues include Cys-308, Cys-310, Cys-313, and His-339.

This sequence belongs to the queuine tRNA-ribosyltransferase family. In terms of assembly, homodimer. Within each dimer, one monomer is responsible for RNA recognition and catalysis, while the other monomer binds to the replacement base PreQ1. It depends on Zn(2+) as a cofactor.

It catalyses the reaction 7-aminomethyl-7-carbaguanine + guanosine(34) in tRNA = 7-aminomethyl-7-carbaguanosine(34) in tRNA + guanine. Its pathway is tRNA modification; tRNA-queuosine biosynthesis. In terms of biological role, catalyzes the base-exchange of a guanine (G) residue with the queuine precursor 7-aminomethyl-7-deazaguanine (PreQ1) at position 34 (anticodon wobble position) in tRNAs with GU(N) anticodons (tRNA-Asp, -Asn, -His and -Tyr). Catalysis occurs through a double-displacement mechanism. The nucleophile active site attacks the C1' of nucleotide 34 to detach the guanine base from the RNA, forming a covalent enzyme-RNA intermediate. The proton acceptor active site deprotonates the incoming PreQ1, allowing a nucleophilic attack on the C1' of the ribose to form the product. After dissociation, two additional enzymatic reactions on the tRNA convert PreQ1 to queuine (Q), resulting in the hypermodified nucleoside queuosine (7-(((4,5-cis-dihydroxy-2-cyclopenten-1-yl)amino)methyl)-7-deazaguanosine). The chain is Queuine tRNA-ribosyltransferase from Bacillus subtilis (strain 168).